A 91-amino-acid polypeptide reads, in one-letter code: MSENTTATTRARRKVREGLVVSDKMEKTVVVEVEDRVKHALYGKIMRRTSKLKVHDEQNSAGIGDRVLIMETRPLSATKRWRLVEILEKAK.

Belongs to the universal ribosomal protein uS17 family. In terms of assembly, part of the 30S ribosomal subunit.

In terms of biological role, one of the primary rRNA binding proteins, it binds specifically to the 5'-end of 16S ribosomal RNA. This chain is Small ribosomal subunit protein uS17, found in Salinispora arenicola (strain CNS-205).